The following is an 87-amino-acid chain: Small ribosomal subunit protein bS16 (87 aa).

Belongs to the bacterial ribosomal protein bS16 family.

This Onion yellows phytoplasma (strain OY-M) protein is Small ribosomal subunit protein bS16.